The sequence spans 498 residues: Putative F-box/FBD/LRR-repeat protein At4g03220 (498 aa).

An F-box domain is found at Val-23–Ile-71. LRR repeat units follow at residues Ser-148 to Arg-172, Phe-175 to Asp-200, and Ser-235 to Ser-259. The FBD domain maps to Tyr-416–Ser-466.

In Arabidopsis thaliana (Mouse-ear cress), this protein is Putative F-box/FBD/LRR-repeat protein At4g03220.